A 392-amino-acid chain; its full sequence is Chalcone synthase-like protein 1 (392 aa).

Cys-166 is an active-site residue.

This sequence belongs to the thiolase-like superfamily. Chalcone/stilbene synthases family. As to expression, expressed at the same level in leaves and in glandular trichomes.

It localises to the cytoplasm. In terms of biological role, chalcone synthase that may use malonyl-CoA and hexanoyl-CoA as substrates but without producing olivetol or olivetolic acid. This is Chalcone synthase-like protein 1 (CAN383) from Cannabis sativa (Hemp).